The primary structure comprises 444 residues: L-seryl-tRNA(Sec) selenium transferase (444 aa).

Position 284 is an N6-(pyridoxal phosphate)lysine (K284).

The protein belongs to the SelA family. Pyridoxal 5'-phosphate serves as cofactor.

It is found in the cytoplasm. It carries out the reaction L-seryl-tRNA(Sec) + selenophosphate + H(+) = L-selenocysteinyl-tRNA(Sec) + phosphate. The protein operates within aminoacyl-tRNA biosynthesis; selenocysteinyl-tRNA(Sec) biosynthesis; selenocysteinyl-tRNA(Sec) from L-seryl-tRNA(Sec) (bacterial route): step 1/1. In terms of biological role, converts seryl-tRNA(Sec) to selenocysteinyl-tRNA(Sec) required for selenoprotein biosynthesis. The chain is L-seryl-tRNA(Sec) selenium transferase from Wolinella succinogenes (strain ATCC 29543 / DSM 1740 / CCUG 13145 / JCM 31913 / LMG 7466 / NCTC 11488 / FDC 602W) (Vibrio succinogenes).